The sequence spans 212 residues: Outer-membrane lipoprotein LolB (212 aa).

A signal peptide spans M1–G16. C17 is lipidated: N-palmitoyl cysteine. A lipid anchor (S-diacylglycerol cysteine) is attached at C17.

It belongs to the LolB family. In terms of assembly, monomer.

It is found in the cell outer membrane. Plays a critical role in the incorporation of lipoproteins in the outer membrane after they are released by the LolA protein. The protein is Outer-membrane lipoprotein LolB of Nitrosomonas europaea (strain ATCC 19718 / CIP 103999 / KCTC 2705 / NBRC 14298).